A 731-amino-acid polypeptide reads, in one-letter code: Catalase-peroxidase (731 aa).

The interval 1 to 24 is disordered; the sequence is MSTEPNCPFSGNARKHTAAGAPSN. A cross-link (tryptophyl-tyrosyl-methioninium (Trp-Tyr) (with M-245)) is located at residues 96-219; it reads WHSAGTYRVS…LGAVQMGLIY (124 aa). The Proton acceptor role is filled by H97. Residues 219–245 constitute a cross-link (tryptophyl-tyrosyl-methioninium (Tyr-Met) (with W-96)); the sequence is YVNPEGPNGNPDPIAAARDIRETFARM. H260 serves as a coordination point for heme b. Positions 339 to 365 are disordered; sequence GAQQWKPKGDAGAGTVPDAHDPSKRHA.

Belongs to the peroxidase family. Peroxidase/catalase subfamily. In terms of assembly, homodimer or homotetramer. The cofactor is heme b. In terms of processing, formation of the three residue Trp-Tyr-Met cross-link is important for the catalase, but not the peroxidase activity of the enzyme.

It catalyses the reaction H2O2 + AH2 = A + 2 H2O. The catalysed reaction is 2 H2O2 = O2 + 2 H2O. In terms of biological role, bifunctional enzyme with both catalase and broad-spectrum peroxidase activity. The polypeptide is Catalase-peroxidase (Polaromonas sp. (strain JS666 / ATCC BAA-500)).